Reading from the N-terminus, the 78-residue chain is Probable [Fe-S]-dependent transcriptional repressor (78 aa).

Iron-sulfur cluster contacts are provided by Cys-56, Cys-61, Cys-64, and Cys-70.

The protein belongs to the FeoC family.

In terms of biological role, may function as a transcriptional regulator that controls feoABC expression. In Escherichia coli (strain UTI89 / UPEC), this protein is Probable [Fe-S]-dependent transcriptional repressor.